The chain runs to 147 residues: Alpha-amylase/trypsin inhibitor (147 aa).

The first 21 residues, 1 to 21 (MASDHRRFVLSGAVLLSVLAV), serve as a signal peptide directing secretion.

Belongs to the protease inhibitor I6 (cereal trypsin/alpha-amylase inhibitor) family. Five disulfide bonds, which are essential for the inhibitor activity, are probably present. As to expression, endosperm.

The protein localises to the secreted. In terms of biological role, alpha-amylase/trypsin inhibitor. The polypeptide is Alpha-amylase/trypsin inhibitor (Hordeum vulgare (Barley)).